The chain runs to 461 residues: uncharacterized protein (461 aa).

Basic and acidic residues predominate over residues 1 to 19 (MEKCSHESGRHSAENDGKY). The disordered stretch occupies residues 1–21 (MEKCSHESGRHSAENDGKYDI).

Belongs to the CapA family.

Could be involved in the biosynthesis of a cell wall component. This is an uncharacterized protein from Sinorhizobium fredii (strain NBRC 101917 / NGR234).